A 636-amino-acid chain; its full sequence is Probable Xaa-Pro aminopeptidase P (636 aa).

4 residues coordinate Mn(2+): aspartate 414, aspartate 425, glutamate 523, and glutamate 537.

The protein belongs to the peptidase M24B family. It depends on Mn(2+) as a cofactor.

It catalyses the reaction Release of any N-terminal amino acid, including proline, that is linked to proline, even from a dipeptide or tripeptide.. Functionally, catalyzes the removal of a penultimate prolyl residue from the N-termini of peptides. This is Probable Xaa-Pro aminopeptidase P (AMPP) from Ajellomyces capsulatus (strain H143) (Darling's disease fungus).